A 406-amino-acid chain; its full sequence is B3 domain-containing protein Os11g0197600 (406 aa).

A disordered region spans residues 1–20 (MVVREKQGGRMGKGKGKGKE). A DNA-binding region (TF-B3 1) is located at residues 30 to 123 (RSFFRVLLTL…QFSVTVFEPS (94 aa)). Residues 199-245 (ESSRRKRAGASAGKSKVTSTSHNSTRGSSCSSDEDNSSSKSPNPPFL) form a disordered region. The span at 214-225 (KVTSTSHNSTRG) shows a compositional bias: polar residues. A DNA-binding region (TF-B3 2) is located at residues 298 to 393 (AVQIMMESYV…NIKVHIYRVV (96 aa)).

Its subcellular location is the nucleus. The sequence is that of B3 domain-containing protein Os11g0197600 from Oryza sativa subsp. japonica (Rice).